The primary structure comprises 53 residues: Large ribosomal subunit protein bL33 (53 aa).

Belongs to the bacterial ribosomal protein bL33 family.

The protein is Large ribosomal subunit protein bL33 of Blochmanniella floridana.